A 139-amino-acid polypeptide reads, in one-letter code: Putative nickel-responsive regulator (139 aa).

Ni(2+)-binding residues include His-79, His-90, His-92, and Cys-98.

Belongs to the transcriptional regulatory CopG/NikR family. Requires Ni(2+) as cofactor.

Its function is as follows. Transcriptional regulator. This chain is Putative nickel-responsive regulator, found in Nitratidesulfovibrio vulgaris (strain DSM 19637 / Miyazaki F) (Desulfovibrio vulgaris).